Consider the following 345-residue polypeptide: Phosphoribosylformylglycinamidine cyclo-ligase (345 aa).

It belongs to the AIR synthase family.

The protein localises to the cytoplasm. It catalyses the reaction 2-formamido-N(1)-(5-O-phospho-beta-D-ribosyl)acetamidine + ATP = 5-amino-1-(5-phospho-beta-D-ribosyl)imidazole + ADP + phosphate + H(+). It participates in purine metabolism; IMP biosynthesis via de novo pathway; 5-amino-1-(5-phospho-D-ribosyl)imidazole from N(2)-formyl-N(1)-(5-phospho-D-ribosyl)glycinamide: step 2/2. This chain is Phosphoribosylformylglycinamidine cyclo-ligase, found in Chromobacterium violaceum (strain ATCC 12472 / DSM 30191 / JCM 1249 / CCUG 213 / NBRC 12614 / NCIMB 9131 / NCTC 9757 / MK).